The following is a 126-amino-acid chain: Arginine decarboxylase proenzyme (126 aa).

Catalysis depends on S74, which acts as the Schiff-base intermediate with substrate; via pyruvic acid. S74 is modified (pyruvic acid (Ser); by autocatalysis). H79 serves as the catalytic Proton acceptor; for processing activity. C94 (proton donor; for catalytic activity) is an active-site residue.

It belongs to the prokaryotic AdoMetDC family. Type 1 subfamily. Heterooctamer of four alpha and four beta chains arranged as a tetramer of alpha/beta heterodimers. Requires pyruvate as cofactor. Post-translationally, is synthesized initially as an inactive proenzyme. Formation of the active enzyme involves a self-maturation process in which the active site pyruvoyl group is generated from an internal serine residue via an autocatalytic post-translational modification. Two non-identical subunits are generated from the proenzyme in this reaction, and the pyruvate is formed at the N-terminus of the alpha chain, which is derived from the carboxyl end of the proenzyme. The post-translation cleavage follows an unusual pathway, termed non-hydrolytic serinolysis, in which the side chain hydroxyl group of the serine supplies its oxygen atom to form the C-terminus of the beta chain, while the remainder of the serine residue undergoes an oxidative deamination to produce ammonia and the pyruvoyl group blocking the N-terminus of the alpha chain.

It carries out the reaction L-arginine + H(+) = agmatine + CO2. It participates in amine and polyamine biosynthesis; agmatine biosynthesis; agmatine from L-arginine: step 1/1. In terms of biological role, specifically catalyzes the decarboxylation of L-arginine to agmatine. Has no S-adenosylmethionine decarboxylase (AdoMetDC) activity. The sequence is that of Arginine decarboxylase proenzyme from Pyrobaculum islandicum (strain DSM 4184 / JCM 9189 / GEO3).